Here is a 529-residue protein sequence, read N- to C-terminus: Cytochrome P450 monooxygenase ausG (529 aa).

Residues 31-51 (LLVVCGLPGLLLLFFVTAILL) form a helical membrane-spanning segment. Cys470 contacts heme.

It belongs to the cytochrome P450 family. It depends on heme as a cofactor.

It localises to the membrane. The protein operates within secondary metabolite biosynthesis; terpenoid biosynthesis. Functionally, cytochrome P450 monooxygenase; part of the gene cluster that mediates the biosynthesis of calidodehydroaustin, a fungal meroterpenoid. The first step of the pathway is the synthesis of 3,5-dimethylorsellinic acid by the polyketide synthase ausA. 3,5-dimethylorsellinic acid is then prenylated by the polyprenyl transferase ausN. Further epoxidation by the FAD-dependent monooxygenase ausM and cyclization by the probable terpene cyclase ausL lead to the formation of protoaustinoid A. Protoaustinoid A is then oxidized to spiro-lactone preaustinoid A3 by the combined action of the FAD-binding monooxygenases ausB and ausC, and the dioxygenase ausE. Acid-catalyzed keto-rearrangement and ring contraction of the tetraketide portion of preaustinoid A3 by ausJ lead to the formation of preaustinoid A4. The aldo-keto reductase ausK, with the help of ausH, is involved in the next step by transforming preaustinoid A4 into isoaustinone which is in turn hydroxylated by the P450 monooxygenase ausI to form austinolide. The cytochrome P450 monooxygenase ausG modifies austinolide to austinol. Austinol is further acetylated to austin by the O-acetyltransferase ausP, which spontaneously changes to dehydroaustin. The cytochrome P450 monooxygenase ausR then converts dehydroaustin is into 7-dehydrodehydroaustin. The hydroxylation catalyzed by ausR permits the O-acetyltransferase ausQ to add an additional acetyl group to the molecule, leading to the formation of acetoxydehydroaustin. The short chain dehydrogenase ausT catalyzes the reduction of the double bond present between carbon atoms 1 and 2 to convert 7-dehydrodehydroaustin into 1,2-dihydro-7-hydroxydehydroaustin. AusQ catalyzes not only an acetylation reaction but also the addition of the PKS ausV diketide product to 1,2-dihydro-7-hydroxydehydroaustin, forming precalidodehydroaustin. Finally, the iron/alpha-ketoglutarate-dependent dioxygenase converts precalidodehydroaustin into calidodehydroaustin. The protein is Cytochrome P450 monooxygenase ausG of Aspergillus calidoustus.